A 579-amino-acid chain; its full sequence is Salivary alpha-glucosidase (579 aa).

Positions 1-18 (MKIFVPLLSFLLAGLTTG) are cleaved as a signal peptide. The Ca(2+) site is built by D37, D39, D41, I43, D45, and N118. 2 N-linked (GlcNAc...) asparagine glycosylation sites follow: N118 and N151. A Ca(2+)-binding site is contributed by D189. The active-site Nucleophile is the D219. Residues Y223, L224, and E226 each coordinate Ca(2+). N282 carries an N-linked (GlcNAc...) asparagine glycan. The Proton donor role is filled by E290. 3 N-linked (GlcNAc...) asparagine glycosylation sites follow: N304, N325, and N401. N325 lines the N-acetyl-beta-D-glucosamine pocket.

This sequence belongs to the glycosyl hydrolase 13 family. In terms of tissue distribution, saliva (at protein level). Proximal lateral lobes of the salivary gland (at protein level).

Its subcellular location is the secreted. It catalyses the reaction Hydrolysis of terminal, non-reducing (1-&gt;4)-linked alpha-D-glucose residues with release of alpha-D-glucose.. Functionally, functions as a glucosidase that shows high activity toward sucrose, a major component of nectar. Assists the mosquito in its sugar-feeding capabilities. The chain is Salivary alpha-glucosidase from Aedes aegypti (Yellowfever mosquito).